Consider the following 501-residue polypeptide: Actin-binding protein WASF3 (501 aa).

A coiled-coil region spans residues 57–93; it reads NEANNFYIRANSLQDRIDRLAVKVTQLDSTVEEVSLQ. The residue at position 151 (tyrosine 151) is a Phosphotyrosine; by ABL1. Residues 162–206 are a coiled coil; that stretch reads KEKMLQDTEDKRKEKRRQKEQKRVDGTTREVKKVRKARNRRQEWN. The tract at residues 170 to 443 is disordered; it reads EDKRKEKRRQ…PPISDARSDL (274 aa). Residues 182–192 are compositionally biased toward basic and acidic residues; the sequence is QKRVDGTTREV. Polar residues predominate over residues 219–237; the sequence is RLSQSVHHGASSEGSLSPD. Tyrosine 248 is subject to Phosphotyrosine; by ABL1. The span at 256-267 shows a compositional bias: polar residues; it reads HALQAQPATPSY. Over residues 302-312 the composition is skewed to pro residues; that stretch reads QQPPPPPPPQA. Tyrosine 337 carries the phosphotyrosine; by ABL1 modification. Pro residues-rich tracts occupy residues 341–352 and 394–410; these read SGPPPPPPPPMI and APPP…PPGP. Over residues 411–422 the composition is skewed to low complexity; the sequence is SSLSSSPMHGPP. In terms of domain architecture, WH2 spans 439–456; sequence ARSDLLAAIRMGIQLKKV. Phosphotyrosine; by ABL1 is present on tyrosine 485.

Belongs to the SCAR/WAVE family. In terms of assembly, binds actin and the Arp2/3 complex. Post-translationally, phosphorylation by ABL1 promotes lamellipodia formation and cell migration.

It localises to the cytoplasm. Its subcellular location is the cytoskeleton. Functionally, downstream effector molecules involved in the transmission of signals from tyrosine kinase receptors and small GTPases to the actin cytoskeleton. Plays a role in the regulation of cell morphology and cytoskeletal organization. Required in the control of cell shape. In Mus musculus (Mouse), this protein is Actin-binding protein WASF3 (Wasf3).